The following is a 304-amino-acid chain: MRILFLGTPSFASEHLEFLIKNNFDVVAVISQPDKPKGRGKKVQPTPVKEVAQKYNIPVFQPTKLTSEGLSIIERYKPDLGIVVAYGKLLKPPFLNAIPFYNIHASLLPKYRGAAPIQRALENGESVTGITIFKIGEGMDDGPIALKKEISVGEFETFGSLYEKLLSLGKEALLEFLNNYPPNLYPQEGVPTYAPKISKEDLELDFSADYVTVKNKIRAYDPIPGVRSVLKGKIVKLFQVFYVEADENIKEYGKVLKINNEGGFISAKGGIVGIKYIQFPGKKPITFLDAKNGGLVKEGDKFES.

Position 106–109 (106–109 (SLLP)) interacts with (6S)-5,6,7,8-tetrahydrofolate.

This sequence belongs to the Fmt family.

It catalyses the reaction L-methionyl-tRNA(fMet) + (6R)-10-formyltetrahydrofolate = N-formyl-L-methionyl-tRNA(fMet) + (6S)-5,6,7,8-tetrahydrofolate + H(+). Functionally, attaches a formyl group to the free amino group of methionyl-tRNA(fMet). The formyl group appears to play a dual role in the initiator identity of N-formylmethionyl-tRNA by promoting its recognition by IF2 and preventing the misappropriation of this tRNA by the elongation apparatus. This Thermosipho africanus (strain TCF52B) protein is Methionyl-tRNA formyltransferase.